A 387-amino-acid polypeptide reads, in one-letter code: F-box protein DOR (387 aa).

The F-box domain occupies D19–L64.

As to quaternary structure, part of a SCF (ASK-cullin-F-box) protein ligase complex. Interacts with ASK14 and CUL1. Strongly expressed in guard cells. Mostly represented in seedlings, leaves and flowers, and, to a lower extent, in roots and siliques.

It participates in protein modification; protein ubiquitination. Its function is as follows. Component of SCF(ASK-cullin-F-box) E3 ubiquitin ligase complexes, which may mediate the ubiquitination and subsequent proteasomal degradation of target proteins. Negative regulator of guard cell abscisic acid (ABA) signaling, especially during drought stress. This is F-box protein DOR (DOR) from Arabidopsis thaliana (Mouse-ear cress).